Here is a 711-residue protein sequence, read N- to C-terminus: Polyribonucleotide nucleotidyltransferase (711 aa).

2 residues coordinate Mg(2+): Asp-487 and Asp-493. One can recognise a KH domain in the interval Pro-554 to Ile-613. An S1 motif domain is found at Gly-623–Lys-691. The disordered stretch occupies residues Lys-691–Glu-711.

This sequence belongs to the polyribonucleotide nucleotidyltransferase family. In terms of assembly, component of the RNA degradosome, which is a multiprotein complex involved in RNA processing and mRNA degradation. Mg(2+) serves as cofactor.

The protein resides in the cytoplasm. It catalyses the reaction RNA(n+1) + phosphate = RNA(n) + a ribonucleoside 5'-diphosphate. Functionally, involved in mRNA degradation. Catalyzes the phosphorolysis of single-stranded polyribonucleotides processively in the 3'- to 5'-direction. The chain is Polyribonucleotide nucleotidyltransferase from Vibrio parahaemolyticus serotype O3:K6 (strain RIMD 2210633).